Reading from the N-terminus, the 488-residue chain is Cobyric acid synthase (488 aa).

One can recognise a GATase cobBQ-type domain in the interval 248–435 (VLKVVVPVLP…LHGLFESPAA (188 aa)). C329 acts as the Nucleophile in catalysis. H427 is a catalytic residue.

Belongs to the CobB/CobQ family. CobQ subfamily.

It functions in the pathway cofactor biosynthesis; adenosylcobalamin biosynthesis. Catalyzes amidations at positions B, D, E, and G on adenosylcobyrinic A,C-diamide. NH(2) groups are provided by glutamine, and one molecule of ATP is hydrogenolyzed for each amidation. The protein is Cobyric acid synthase of Pseudomonas fluorescens (strain Pf0-1).